The sequence spans 466 residues: 3-isopropylmalate dehydratase large subunit (466 aa).

Residues Cys-347, Cys-407, and Cys-410 each coordinate [4Fe-4S] cluster.

The protein belongs to the aconitase/IPM isomerase family. LeuC type 1 subfamily. As to quaternary structure, heterodimer of LeuC and LeuD. It depends on [4Fe-4S] cluster as a cofactor.

It carries out the reaction (2R,3S)-3-isopropylmalate = (2S)-2-isopropylmalate. The protein operates within amino-acid biosynthesis; L-leucine biosynthesis; L-leucine from 3-methyl-2-oxobutanoate: step 2/4. Functionally, catalyzes the isomerization between 2-isopropylmalate and 3-isopropylmalate, via the formation of 2-isopropylmaleate. The chain is 3-isopropylmalate dehydratase large subunit from Escherichia coli O9:H4 (strain HS).